A 466-amino-acid polypeptide reads, in one-letter code: MIKPRTPPGVLELLPREQIAFQRMLDVIRRNYERFGFLPVETPVFELSDVLLTKSGGETERQVYFVQSTGTLANAAESGATRLPELALRFDLTVPLARYVAEYEHVLAFPFRRYQIQRVYRGERAQRGRFREFYQCDIDVIGKQTLSIRYDAEVLAVIHAVFSELGIGDFQVQLNNRKVLRGFLESQGVRDGELQLAVLREVDKLDKRGVLDVRDTLIGQGFGIPAAQVENILTFVATRSTSHADALARLDALIQDSGPEAHDMLRQGVAELREVLTLVNVLGVPEHAYRLNFSIARGLDYYTGTVYETALINHPQIGSICSGGRYENLANHYTQSKLPGVGISIGLTRLFWQLRDAGLIDGIAESSVQAMVVLMDEATLDDALDIARRLRIGGINTEVQMEAKKLSKQFQYASRAGIRFVVLAGDDERARGVVAVKDLTREQQFEIPREELASTLQVELEQAKVM.

The protein belongs to the class-II aminoacyl-tRNA synthetase family. Homodimer.

It is found in the cytoplasm. The catalysed reaction is tRNA(His) + L-histidine + ATP = L-histidyl-tRNA(His) + AMP + diphosphate + H(+). The polypeptide is Histidine--tRNA ligase (Xylella fastidiosa (strain M23)).